A 183-amino-acid polypeptide reads, in one-letter code: ER membrane protein complex subunit 4 (183 aa).

T2 carries the N-acetylthreonine modification. At 2–66 the chain is on the cytoplasmic side; it reads TAQGGLVANR…VQETDRILVE (65 aa). The tract at residues 20-39 is disordered; that stretch reads ELSGPGGGSRGRSDRGSGQG. Phosphoserine is present on S36. The helical transmembrane segment at 67 to 87 threads the bilayer; that stretch reads KRCWDIALGPLKQIPMNLFIM. The Lumenal segment spans residues 88-98; the sequence is YMAGNTISIFP. A helical transmembrane segment spans residues 99-120; the sequence is TMMVCMMAWRPIQALMAISATF. The Cytoplasmic segment spans residues 121–127; sequence KMLESSS. A helical transmembrane segment spans residues 128–148; sequence QKFLQGLVYLIGNLMGLALAV. Over 149–183 the chain is Lumenal; the sequence is YKCQSMGLLPTHASDWLAFIEPPERMEFSGGGLLL.

It belongs to the EMC4 family. In terms of assembly, component of the ER membrane protein complex (EMC). In terms of tissue distribution, isoform 1 is expressed in brain and heart. Isoform 2 is expressed in heart.

Its subcellular location is the endoplasmic reticulum membrane. Its function is as follows. Part of the endoplasmic reticulum membrane protein complex (EMC) that enables the energy-independent insertion into endoplasmic reticulum membranes of newly synthesized membrane proteins. Preferentially accommodates proteins with transmembrane domains that are weakly hydrophobic or contain destabilizing features such as charged and aromatic residues. Involved in the cotranslational insertion of multi-pass membrane proteins in which stop-transfer membrane-anchor sequences become ER membrane spanning helices. It is also required for the post-translational insertion of tail-anchored/TA proteins in endoplasmic reticulum membranes. By mediating the proper cotranslational insertion of N-terminal transmembrane domains in an N-exo topology, with translocated N-terminus in the lumen of the ER, controls the topology of multi-pass membrane proteins like the G protein-coupled receptors. By regulating the insertion of various proteins in membranes, it is indirectly involved in many cellular processes. The polypeptide is ER membrane protein complex subunit 4 (EMC4) (Homo sapiens (Human)).